The chain runs to 490 residues: Cytochrome P450 2C50 (490 aa).

A Phosphoserine modification is found at serine 127. 2 positions are modified to N6-acetyllysine: lysine 249 and lysine 375. Position 435 (cysteine 435) interacts with heme.

Belongs to the cytochrome P450 family. Requires heme as cofactor. As to expression, expressed in heart and liver.

It is found in the endoplasmic reticulum membrane. The protein localises to the microsome membrane. It catalyses the reaction an organic molecule + reduced [NADPH--hemoprotein reductase] + O2 = an alcohol + oxidized [NADPH--hemoprotein reductase] + H2O + H(+). Its function is as follows. Metabolizes arachidonic acid to several midchain and omega-terminal hydroxyeicosatetraenoic acids (HETE). This chain is Cytochrome P450 2C50, found in Mus musculus (Mouse).